A 226-amino-acid polypeptide reads, in one-letter code: MNENLFASFATPTMMGLPIVILIVLFPSILFPSPDRLINNRLASIQQWLIQLTSKQMLSIHNRKGQTWALMLISLILFIGSTNLLGLLPHSFTPTTQLSMNLGMAIPLWAGTVITGFRHKTKASLAHFLPQGTPLPLIPMLVIIETISLFIQPMALAVRLTANITAGHLLIHLIGGATLALMDISTATAFITFTILILLTILEFAVALIQAYVFTLLVSLYLHDNT.

The next 6 membrane-spanning stretches (helical) occupy residues 12-32 (PTMM…ILFP), 68-88 (WALM…LGLL), 97-117 (QLSM…ITGF), 138-158 (IPML…ALAV), 164-184 (ITAG…LMDI), and 189-209 (AFIT…VALI).

This sequence belongs to the ATPase A chain family. In terms of assembly, component of the ATP synthase complex composed at least of ATP5F1A/subunit alpha, ATP5F1B/subunit beta, ATP5MC1/subunit c (homooctomer), MT-ATP6/subunit a, MT-ATP8/subunit 8, ATP5ME/subunit e, ATP5MF/subunit f, ATP5MG/subunit g, ATP5MK/subunit k, ATP5MJ/subunit j, ATP5F1C/subunit gamma, ATP5F1D/subunit delta, ATP5F1E/subunit epsilon, ATP5PF/subunit F6, ATP5PB/subunit b, ATP5PD/subunit d, ATP5PO/subunit OSCP. ATP synthase complex consists of a soluble F(1) head domain (subunits alpha(3) and beta(3)) - the catalytic core - and a membrane F(0) domain - the membrane proton channel (subunits c, a, 8, e, f, g, k and j). These two domains are linked by a central stalk (subunits gamma, delta, and epsilon) rotating inside the F1 region and a stationary peripheral stalk (subunits F6, b, d, and OSCP). Interacts with DNAJC30; interaction is direct.

It is found in the mitochondrion inner membrane. The catalysed reaction is H(+)(in) = H(+)(out). Its function is as follows. Subunit a, of the mitochondrial membrane ATP synthase complex (F(1)F(0) ATP synthase or Complex V) that produces ATP from ADP in the presence of a proton gradient across the membrane which is generated by electron transport complexes of the respiratory chain. ATP synthase complex consist of a soluble F(1) head domain - the catalytic core - and a membrane F(1) domain - the membrane proton channel. These two domains are linked by a central stalk rotating inside the F(1) region and a stationary peripheral stalk. During catalysis, ATP synthesis in the catalytic domain of F(1) is coupled via a rotary mechanism of the central stalk subunits to proton translocation. With the subunit c (ATP5MC1), forms the proton-conducting channel in the F(0) domain, that contains two crucial half-channels (inlet and outlet) that facilitate proton movement from the mitochondrial intermembrane space (IMS) into the matrix. Protons are taken up via the inlet half-channel and released through the outlet half-channel, following a Grotthuss mechanism. The polypeptide is ATP synthase F(0) complex subunit a (Phoca vitulina (Harbor seal)).